A 319-amino-acid chain; its full sequence is Ferrochelatase (319 aa).

Positions 194 and 275 each coordinate Fe cation.

Belongs to the ferrochelatase family.

It localises to the cytoplasm. It carries out the reaction heme b + 2 H(+) = protoporphyrin IX + Fe(2+). It functions in the pathway porphyrin-containing compound metabolism; protoheme biosynthesis; protoheme from protoporphyrin-IX: step 1/1. Its function is as follows. Catalyzes the ferrous insertion into protoporphyrin IX. In Vibrio vulnificus (strain YJ016), this protein is Ferrochelatase.